The sequence spans 279 residues: MKENEKVIMEKGIHTDFKENMTYGEYLQLDSLLSSQKRLSDHHDEMLFIVIHQASELWMKLILHELNAAIESIKQDKLQPAFKMLARVSKIQSQIIQSWDILATLTPSEYIEFRDSLGQASGFQSYQYRMIEYALGYKTPHALKIYEKDQELHARLHTALHAPSLYDVAIQALVKEGFSIHKDVLNRDITQPYEEDATVEAAWLEVYADVKKYWNLYQLAEKLIDIEDWLQQWRFRHMKTVERIIGHKMGTGGSSGVSYLKRVLDQRFFPELWNVRTKL.

Substrate-binding positions include 48 to 52 (FIVIH), tyrosine 110, and arginine 114. Residue histidine 237 participates in heme binding. Threonine 251 contributes to the substrate binding site.

The protein belongs to the tryptophan 2,3-dioxygenase family. Homotetramer. Heme serves as cofactor.

The enzyme catalyses L-tryptophan + O2 = N-formyl-L-kynurenine. It functions in the pathway amino-acid degradation; L-tryptophan degradation via kynurenine pathway; L-kynurenine from L-tryptophan: step 1/2. Functionally, heme-dependent dioxygenase that catalyzes the oxidative cleavage of the L-tryptophan (L-Trp) pyrrole ring and converts L-tryptophan to N-formyl-L-kynurenine. Catalyzes the oxidative cleavage of the indole moiety. The sequence is that of Tryptophan 2,3-dioxygenase from Bacillus thuringiensis subsp. konkukian (strain 97-27).